An 84-amino-acid chain; its full sequence is Sec-independent protein translocase protein TatA (84 aa).

Residues 1–21 (MGGFSIWHWLIVLLIVVMVFG) traverse the membrane as a helical segment. The interval 40–84 (KDGMKDGGQSPADEKPVVPASQVTNAQAADKAERNTIDVEARQKS) is disordered. Basic and acidic residues predominate over residues 69 to 84 (DKAERNTIDVEARQKS).

Belongs to the TatA/E family. In terms of assembly, the Tat system comprises two distinct complexes: a TatABC complex, containing multiple copies of TatA, TatB and TatC subunits, and a separate TatA complex, containing only TatA subunits. Substrates initially bind to the TatABC complex, which probably triggers association of the separate TatA complex to form the active translocon.

The protein localises to the cell inner membrane. In terms of biological role, part of the twin-arginine translocation (Tat) system that transports large folded proteins containing a characteristic twin-arginine motif in their signal peptide across membranes. TatA could form the protein-conducting channel of the Tat system. The polypeptide is Sec-independent protein translocase protein TatA (Polaromonas naphthalenivorans (strain CJ2)).